A 746-amino-acid chain; its full sequence is WD repeat-containing protein 91 (746 aa).

The stretch at 183 to 215 (QRTNQVQEENEVLRQKLFALQAEIHRLKKEEQQ) forms a coiled coil. A Phosphoserine modification is found at Ser-256. Positions 265 to 278 (LLPQSKKSPSRLSP) are enriched in low complexity. The tract at residues 265-336 (LLPQSKKSPS…QHRQRRLQDH (72 aa)) is disordered. The span at 282–299 (PPQTQSSAKKESFGSQTT) shows a compositional bias: polar residues. Phosphoserine occurs at positions 288 and 293. 7 WD repeats span residues 405–444 (EHHS…QTKA), 447–487 (ISKS…NLCE), 514–554 (AASS…QQLQ), 559–598 (PEPI…CAMS), 601–640 (AHCG…LKVS), 663–701 (VQVP…KVLE), and 708–746 (GHRA…AHKV).

This sequence belongs to the WD repeat WDR91 family. As to quaternary structure, interacts with WDR81; involved in early to late endosome cargo transport. Interacts with BECN1; negatively regulates the PI3 kinase/PI3K activity associated with endosomal membranes.

The protein localises to the early endosome membrane. It is found in the late endosome membrane. Functionally, functions as a negative regulator of the PI3 kinase/PI3K activity associated with endosomal membranes via BECN1, a core subunit of the PI3K complex. By modifying the phosphatidylinositol 3-phosphate/PtdInsP3 content of endosomal membranes may regulate endosome fusion, recycling, sorting and early to late endosome transport. It is for instance, required for the delivery of cargos like BST2/tetherin from early to late endosome and thereby participates indirectly to their degradation by the lysosome. May play a role in meiosis. The protein is WD repeat-containing protein 91 of Bos taurus (Bovine).